We begin with the raw amino-acid sequence, 206 residues long: Small ribosomal subunit protein uS5 (206 aa).

The segment covering 1–15 has biased composition (polar residues); that stretch reads MTDTPTKQEIQSKND. A disordered region spans residues 1–50; the sequence is MTDTPTKQEIQSKNDNVPAATPVEQKKNNRNDRKRNRRGDSKNLERDSDW. Basic and acidic residues predominate over residues 38–50; that stretch reads RGDSKNLERDSDW. One can recognise an S5 DRBM domain in the interval 50–113; that stretch reads WQERVVQIRR…SDGKKNLVRV (64 aa).

This sequence belongs to the universal ribosomal protein uS5 family. Part of the 30S ribosomal subunit. Contacts proteins S4 and S8.

Its function is as follows. With S4 and S12 plays an important role in translational accuracy. Functionally, located at the back of the 30S subunit body where it stabilizes the conformation of the head with respect to the body. This Prochlorococcus marinus (strain AS9601) protein is Small ribosomal subunit protein uS5.